Consider the following 183-residue polypeptide: Translation initiation factor IF-3 (183 aa).

It belongs to the IF-3 family. In terms of assembly, monomer.

The protein localises to the cytoplasm. IF-3 binds to the 30S ribosomal subunit and shifts the equilibrium between 70S ribosomes and their 50S and 30S subunits in favor of the free subunits, thus enhancing the availability of 30S subunits on which protein synthesis initiation begins. The chain is Translation initiation factor IF-3 from Pseudomonas syringae pv. tomato (strain ATCC BAA-871 / DC3000).